The following is a 358-amino-acid chain: Alanine racemase (358 aa).

The active-site Proton acceptor; specific for D-alanine is K34. K34 carries the N6-(pyridoxal phosphate)lysine modification. R130 is a binding site for substrate. Y254 acts as the Proton acceptor; specific for L-alanine in catalysis. M302 serves as a coordination point for substrate.

Belongs to the alanine racemase family. The cofactor is pyridoxal 5'-phosphate.

It carries out the reaction L-alanine = D-alanine. Its pathway is amino-acid biosynthesis; D-alanine biosynthesis; D-alanine from L-alanine: step 1/1. In terms of biological role, catalyzes the interconversion of L-alanine and D-alanine. May also act on other amino acids. This is Alanine racemase (alr) from Actinobacillus succinogenes (strain ATCC 55618 / DSM 22257 / CCUG 43843 / 130Z).